A 525-amino-acid chain; its full sequence is MDPFLLSIILCSWIFVVVSWKKLNCMRRRLPPGPPRWPIFGNLLQLSPLPHKDFARFCTKYGPLVYLRLGTIDAITTDDPEVIREILIRQDEVFASRPRTLAAVHLAYGCGDVALAPLGPNWKRMRRVCMEHLLTTKRLESFAAHRALEAEHLCQFVWAKAQSGKPVNLREVLGAFSMNNVTRMLLGKQYFGLQSAGPGEAMEFMHITHELFWLLGLIYLGDYLPAWRWLDPYGCEKKMREVEKKVDDFHQKIIDEHRKAREAKKSASLDDDNKEDMDFVDVLLSLPGENGKEHMDDVEIKALMQDMIAAATDTSSVTNEWVMAEVIKNPRVLRKIQEELDGVVGRGRMVAESDLGQLTYLRCVVRESFRMHPAGPFLIPHESLKPTTIMGYDIPARTRIFINTHALGRNTRIWDDVDAFRPERHLPASADGGRVEISHLPDFKILPFSAGKRKCPGAPLGVILVLMALARLFHCFDWSPPDGLRPDDIDTQEVYGMTMPKAKPLVAVATPRLPPQMYGRHGKQV.

A helical membrane pass occupies residues 3–23 (PFLLSIILCSWIFVVVSWKKL). Cysteine 455 is a binding site for heme.

Belongs to the cytochrome P450 family. Requires heme as cofactor.

Its subcellular location is the membrane. The enzyme catalyses dodecanoate + reduced [NADPH--hemoprotein reductase] + O2 = 7-hydroxydodecanoate + oxidized [NADPH--hemoprotein reductase] + H2O + H(+). Its function is as follows. Involved in pollen exine and anther epicuticular layer development. Catalyzes the in-chain hydroxylation of lauric acid (C12:0) preferentially on position 7, generating 7-hydroxylated lauric acid. Does not possess activity with other fatty acids (C14:0, C16:0, C16:1, and C18:0). Participates in a conserved pathway of in-chain hydroxylation of lauric acid required for anther cuticle and pollen exine formation. Directly regulated by TDR, a known regulator of tapetum programmed cell death (PCD) and pollen exine formation. The chain is Cytochrome P450 703A2 from Oryza sativa subsp. japonica (Rice).